The primary structure comprises 103 residues: Co-chaperonin GroES (103 aa).

The protein belongs to the GroES chaperonin family. As to quaternary structure, heptamer of 7 subunits arranged in a ring. Interacts with the chaperonin GroEL.

The protein localises to the cytoplasm. Its function is as follows. Together with the chaperonin GroEL, plays an essential role in assisting protein folding. The GroEL-GroES system forms a nano-cage that allows encapsulation of the non-native substrate proteins and provides a physical environment optimized to promote and accelerate protein folding. GroES binds to the apical surface of the GroEL ring, thereby capping the opening of the GroEL channel. The chain is Co-chaperonin GroES from Parasynechococcus marenigrum (strain WH8102).